The sequence spans 720 residues: Polyribonucleotide nucleotidyltransferase (720 aa).

Residues Asp-487 and Asp-493 each coordinate Mg(2+). Residues 554 to 613 (PRIETFKIPTDKIREVIGTGGKVIREIVEKTGAKINIEDDGTVKVASNDGEAMKAAIKWI) enclose the KH domain. Positions 623 to 691 (GQIYEGTVVK…DRGKTRLSMK (69 aa)) constitute an S1 motif domain. The disordered stretch occupies residues 691–720 (KAVDQQTGEDLEAAGHKAEKADAPREAAGE). Residues 703–720 (AAGHKAEKADAPREAAGE) are compositionally biased toward basic and acidic residues.

The protein belongs to the polyribonucleotide nucleotidyltransferase family. Mg(2+) serves as cofactor.

Its subcellular location is the cytoplasm. It carries out the reaction RNA(n+1) + phosphate = RNA(n) + a ribonucleoside 5'-diphosphate. Functionally, involved in mRNA degradation. Catalyzes the phosphorolysis of single-stranded polyribonucleotides processively in the 3'- to 5'-direction. In Nitrobacter hamburgensis (strain DSM 10229 / NCIMB 13809 / X14), this protein is Polyribonucleotide nucleotidyltransferase.